We begin with the raw amino-acid sequence, 247 residues long: 5'-nucleotidase SurE (247 aa).

4 residues coordinate a divalent metal cation: Asp-8, Asp-9, Ser-39, and Asn-91.

Belongs to the SurE nucleotidase family. A divalent metal cation is required as a cofactor.

It is found in the cytoplasm. The enzyme catalyses a ribonucleoside 5'-phosphate + H2O = a ribonucleoside + phosphate. Functionally, nucleotidase that shows phosphatase activity on nucleoside 5'-monophosphates. The protein is 5'-nucleotidase SurE of Nitrosomonas europaea (strain ATCC 19718 / CIP 103999 / KCTC 2705 / NBRC 14298).